The sequence spans 200 residues: Rho-related protein racD (200 aa).

Residues Ala20, Gly22, Lys23, Thr24, Cys25, Tyr39, and Thr42 each contribute to the GTP site. Thr24 contributes to the Mg(2+) binding site. Short sequence motifs (switch) lie at residues 33–44 (NEFPKDYVPTVF) and 64–82 (DTAGQEDYEQLRPLSYPNT). Thr42 provides a ligand contact to Mg(2+). 3 residues coordinate GTP: Lys123, Asp125, and Ala166. Position 197 is a cysteine methyl ester (Cys197). Cys197 carries S-geranylgeranyl cysteine lipidation. A propeptide spans 198–200 (ALL) (removed in mature form).

It belongs to the small GTPase superfamily. Rho family. Mg(2+) is required as a cofactor.

It is found in the cell membrane. The protein resides in the cytoplasm. Its subcellular location is the cytoskeleton. It carries out the reaction GTP + H2O = GDP + phosphate + H(+). Regulated by guanine nucleotide exchange factors (GEFs) which promote the exchange of bound GDP for free GTP, GTPase activating proteins (GAPs) which increase the GTP hydrolysis activity, and GDP dissociation inhibitors which inhibit the dissociation of the nucleotide from the GTPase. Small GTPase which cycles between active GTP-bound and inactive GDP-bound states. The sequence is that of Rho-related protein racD from Entamoeba histolytica (strain ATCC 30459 / HM-1:IMSS / ABRM).